Consider the following 144-residue polypeptide: Bacilliredoxin SSP1311 (144 aa).

Belongs to the bacilliredoxin family.

In Staphylococcus saprophyticus subsp. saprophyticus (strain ATCC 15305 / DSM 20229 / NCIMB 8711 / NCTC 7292 / S-41), this protein is Bacilliredoxin SSP1311.